Here is a 441-residue protein sequence, read N- to C-terminus: Transforming protein p54/c-ets-1 (441 aa).

The 86-residue stretch at 51 to 136 (ATFSGFAKEQ…EHLEILQKEE (86 aa)) folds into the PNT domain. The tract at residues 130-243 (EILQKEEAKP…DNMCMGRASR (114 aa)) is activation domain; required for transcription activation. Residues 304–312 (FKDYVRDRA) are helix HI-1. Residues 323–330 (AAALAGYT) form a helix HI-2 region. The ETS DNA-binding region spans 335 to 415 (IQLWQFLLEL…AGKRYVYRFV (81 aa)). The helix H4 stretch occupies residues 418-422 (LQSLL). The tract at residues 426-432 (PEELHAM) is helix H5.

This sequence belongs to the ETS family. Binds DNA as a homodimer; homodimerization is required for transcription activation.

The protein resides in the nucleus. The protein localises to the cytoplasm. Autoinhibited by a module composed of four alpha helices (HI-1, HI-2, H4, and H5) that flank the DNA-binding ETS domain, reducing the affinity for DNA. Its function is as follows. Transcription factor. Directly controls the expression of cytokine and chemokine genes in a wide variety of different cellular contexts. This chain is Transforming protein p54/c-ets-1 (ETS1), found in Gallus gallus (Chicken).